A 407-amino-acid polypeptide reads, in one-letter code: Peptidase T (407 aa).

Histidine 78 provides a ligand contact to Zn(2+). The active site involves aspartate 80. Aspartate 139 is a Zn(2+) binding site. The active-site Proton acceptor is glutamate 173. Residues glutamate 174, aspartate 196, and histidine 378 each coordinate Zn(2+).

This sequence belongs to the peptidase M20B family. Zn(2+) serves as cofactor.

It localises to the cytoplasm. It catalyses the reaction Release of the N-terminal residue from a tripeptide.. Its function is as follows. Cleaves the N-terminal amino acid of tripeptides. The chain is Peptidase T from Shewanella halifaxensis (strain HAW-EB4).